Consider the following 86-residue polypeptide: Omega-theraphotoxin-Hhn1f 1 (86 aa).

An N-terminal signal peptide occupies residues 1–21 (MKSIVFVALFGLALLAVVCSA). A propeptide spanning residues 22–50 (SEDAHKELLKEVVRAMVVDKTDAVQAEER) is cleaved from the precursor. 3 cysteine pairs are disulfide-bonded: Cys52-Cys66, Cys59-Cys71, and Cys65-Cys78.

It belongs to the neurotoxin 10 (Hwtx-1) family. 17 (Hntx-9) subfamily. As to expression, expressed by the venom gland.

It localises to the secreted. In terms of biological role, ion channel inhibitor. This chain is Omega-theraphotoxin-Hhn1f 1, found in Cyriopagopus hainanus (Chinese bird spider).